The primary structure comprises 263 residues: Ribosomal RNA large subunit methyltransferase E (263 aa).

S-adenosyl-L-methionine contacts are provided by Gly48, Trp50, Asp68, Asp88, and Asp118. The Proton acceptor role is filled by Lys158. The TRAM domain maps to 205–263; sequence PVREGDIVEATIEDIGEEGDGIAKVENFTVFVSGVEDGETVEVRIDDVKPRYAFAEPVE.

It belongs to the class I-like SAM-binding methyltransferase superfamily. RNA methyltransferase RlmE family.

The protein localises to the cytoplasm. It carries out the reaction uridine(2552) in 23S rRNA + S-adenosyl-L-methionine = 2'-O-methyluridine(2552) in 23S rRNA + S-adenosyl-L-homocysteine + H(+). In terms of biological role, specifically methylates the uridine in position 2552 of 23S rRNA at the 2'-O position of the ribose in the fully assembled 50S ribosomal subunit. The polypeptide is Ribosomal RNA large subunit methyltransferase E (Haloarcula marismortui (strain ATCC 43049 / DSM 3752 / JCM 8966 / VKM B-1809) (Halobacterium marismortui)).